Here is a 361-residue protein sequence, read N- to C-terminus: Eukaryotic translation initiation factor 3 subunit F (361 aa).

2 stretches are compositionally biased toward low complexity: residues 1–32 (MASP…SAPT) and 42–73 (ATPA…APAP). The segment at 1–91 (MASPAVPANV…PGPALPGPFP (91 aa)) is disordered. Alanine 2 carries the N-acetylalanine modification. Serine 52 is subject to Phosphoserine; by CDK11; in vitro. The segment covering 74–90 (AQTPAPSQPGPALPGPF) has biased composition (pro residues). One can recognise an MPN domain in the interval 96-226 (VRLHPVILAS…IKAYVSTLMG (131 aa)). Lysine 242 is subject to N6-acetyllysine. At serine 262 the chain carries Phosphoserine.

This sequence belongs to the eIF-3 subunit F family. Component of the eukaryotic translation initiation factor 3 (eIF-3) complex, which is composed of 13 subunits: EIF3A, EIF3B, EIF3C, EIF3D, EIF3E, EIF3F, EIF3G, EIF3H, EIF3I, EIF3J, EIF3K, EIF3L and EIF3M. The eIF-3 complex appears to include 3 stable modules: module A is composed of EIF3A, EIF3B, EIF3G and EIF3I; module B is composed of EIF3F, EIF3H, and EIF3M; and module C is composed of EIF3C, EIF3D, EIF3E, EIF3K and EIF3L. EIF3C of module C binds EIF3B of module A and EIF3H of module B, thereby linking the three modules. EIF3J is a labile subunit that binds to the eIF-3 complex via EIF3B. The eIF-3 complex may interact with RPS6KB1 under conditions of nutrient depletion. Mitogenic stimulation may lead to binding and activation of a complex composed of MTOR and RPTOR, leading to phosphorylation and release of RPS6KB1 and binding of EIF4B to eIF-3. Interacts with RNF139; the interaction leads to protein translation inhibitions in a ubiquitination-dependent manner. Interacts with DTX1, the interaction is required for deubiquitinating activity towards NOTCH1. Post-translationally, phosphorylation is enhanced upon serum stimulation. Phosphorylated during apoptosis by caspase-processed CDK11.

It localises to the cytoplasm. The enzyme catalyses Thiol-dependent hydrolysis of ester, thioester, amide, peptide and isopeptide bonds formed by the C-terminal Gly of ubiquitin (a 76-residue protein attached to proteins as an intracellular targeting signal).. Functionally, component of the eukaryotic translation initiation factor 3 (eIF-3) complex, which is required for several steps in the initiation of protein synthesis. The eIF-3 complex associates with the 40S ribosome and facilitates the recruitment of eIF-1, eIF-1A, eIF-2:GTP:methionyl-tRNAi and eIF-5 to form the 43S pre-initiation complex (43S PIC). The eIF-3 complex stimulates mRNA recruitment to the 43S PIC and scanning of the mRNA for AUG recognition. The eIF-3 complex is also required for disassembly and recycling of post-termination ribosomal complexes and subsequently prevents premature joining of the 40S and 60S ribosomal subunits prior to initiation. The eIF-3 complex specifically targets and initiates translation of a subset of mRNAs involved in cell proliferation, including cell cycling, differentiation and apoptosis, and uses different modes of RNA stem-loop binding to exert either translational activation or repression. In terms of biological role, deubiquitinates activated NOTCH1, promoting its nuclear import, thereby acting as a positive regulator of Notch signaling. This is Eukaryotic translation initiation factor 3 subunit F (Eif3f) from Mus musculus (Mouse).